The sequence spans 227 residues: UPF0173 metal-dependent hydrolase BT9727_4343 (227 aa).

The protein belongs to the UPF0173 family.

The polypeptide is UPF0173 metal-dependent hydrolase BT9727_4343 (Bacillus thuringiensis subsp. konkukian (strain 97-27)).